The chain runs to 164 residues: V-type proton ATPase 16 kDa proteolipid subunit (164 aa).

The Lumenal portion of the chain corresponds to 1-10 (MSDLCPPTAP). Residues 11-31 (FFGFMGAAVALIFANLGAAYG) form a helical membrane-spanning segment. At 32-53 (TAKSGVGVSSMGVMKPDLVMKS) the chain is on the cytoplasmic side. The helical transmembrane segment at 54 to 74 (IIPVVMAGVLGIYGLIIAVII) threads the bilayer. Topologically, residues 75–96 (GNGVKGPEGGKPQYSSFTGFAH) are lumenal. Residues 97–118 (LAAGLACGLSGMAAGIAIGIVG) form a helical membrane-spanning segment. At 119-130 (DAGVRASAQQAK) the chain is on the cytoplasmic side. The helical transmembrane segment at 131–155 (LYVGMVLILIFAEALGLYGLIVGLI) threads the bilayer. Topologically, residues 156-164 (LTSKEAPCS) are lumenal.

The protein belongs to the V-ATPase proteolipid subunit family. As to quaternary structure, V-ATPase is a heteromultimeric enzyme composed of a peripheral catalytic V1 complex (main components: subunits A, B, C, D, E, and F) attached to an integral membrane V0 proton pore complex (main component: the proteolipid protein; which is present as a hexamer that forms the proton-conducting pore).

It localises to the vacuole membrane. Its function is as follows. Proton-conducting pore forming subunit of the membrane integral V0 complex of vacuolar ATPase. V-ATPase is responsible for acidifying a variety of intracellular compartments in eukaryotic cells. The sequence is that of V-type proton ATPase 16 kDa proteolipid subunit (VAP) from Chrysotila carterae (Marine alga).